The chain runs to 168 residues: Protein-export protein SecB (168 aa).

Residues 1 to 20 (MTDETAANGENEAGRQSQSS) are disordered.

The protein belongs to the SecB family. In terms of assembly, homotetramer, a dimer of dimers. One homotetramer interacts with 1 SecA dimer.

Its subcellular location is the cytoplasm. Its function is as follows. One of the proteins required for the normal export of preproteins out of the cell cytoplasm. It is a molecular chaperone that binds to a subset of precursor proteins, maintaining them in a translocation-competent state. It also specifically binds to its receptor SecA. This chain is Protein-export protein SecB, found in Rhodospirillum centenum (strain ATCC 51521 / SW).